A 191-amino-acid chain; its full sequence is Glutathione-dependent formaldehyde-activating enzyme (191 aa).

The CENP-V/GFA domain occupies 22–169 (FQGGTLECHC…LTELGLPPYD (148 aa)). Positions 29, 31, 50, 52, 55, 97, and 100 each coordinate Zn(2+).

This sequence belongs to the Gfa family. Requires Zn(2+) as cofactor.

The catalysed reaction is S-(hydroxymethyl)glutathione = glutathione + formaldehyde. It functions in the pathway one-carbon metabolism; formaldehyde degradation; formate from formaldehyde (glutathione route): step 1/3. In terms of biological role, catalyzes the condensation of formaldehyde and glutathione to S-hydroxymethylglutathione. This Xanthomonas axonopodis pv. citri (strain 306) protein is Glutathione-dependent formaldehyde-activating enzyme.